A 257-amino-acid chain; its full sequence is uncharacterized protein (257 aa).

To yeast YKR015c.

This is an uncharacterized protein from Saccharomyces cerevisiae (strain ATCC 204508 / S288c) (Baker's yeast).